Consider the following 171-residue polypeptide: Transcription factor E (171 aa).

The 81-residue stretch at 1–81 folds into the HTH TFE/IIEalpha-type domain; that stretch reads MLNLAKELVG…YWKVNVNQIN (81 aa).

Belongs to the TFE family. As to quaternary structure, monomer. Interaction with RNA polymerase subunits RpoF and RpoE is necessary for Tfe stimulatory transcription activity. Able to interact with Tbp and RNA polymerase in the absence of DNA promoter. Interacts both with the preinitiation and elongation complexes.

Transcription factor that plays a role in the activation of archaeal genes transcribed by RNA polymerase. Facilitates transcription initiation by enhancing TATA-box recognition by TATA-box-binding protein (Tbp), and transcription factor B (Tfb) and RNA polymerase recruitment. Not absolutely required for transcription in vitro, but particularly important in cases where Tbp or Tfb function is not optimal. It dynamically alters the nucleic acid-binding properties of RNA polymerases by stabilizing the initiation complex and destabilizing elongation complexes. Seems to translocate with the RNA polymerase following initiation and acts by binding to the non template strand of the transcription bubble in elongation complexes. In Sulfolobus acidocaldarius (strain ATCC 33909 / DSM 639 / JCM 8929 / NBRC 15157 / NCIMB 11770), this protein is Transcription factor E.